The following is a 285-amino-acid chain: Phycobilisome 31.6 kDa linker polypeptide, phycocyanin-associated, rod (285 aa).

The region spanning 1–180 (MPITTAASRL…LYRGYATSDR (180 aa)) is the PBS-linker domain.

Belongs to the phycobilisome linker protein family.

The protein localises to the cellular thylakoid membrane. In terms of biological role, rod linker protein, associated with phycocyanin. Linker polypeptides determine the state of aggregation and the location of the disk-shaped phycobiliprotein units within the phycobilisome and modulate their spectroscopic properties in order to mediate a directed and optimal energy transfer. This chain is Phycobilisome 31.6 kDa linker polypeptide, phycocyanin-associated, rod (cpcI3), found in Microchaete diplosiphon (Fremyella diplosiphon).